Consider the following 339-residue polypeptide: Anthranilate phosphoribosyltransferase (339 aa).

Residues Gly-79, 82 to 83 (GD), Thr-87, 89 to 92 (NVST), 107 to 115 (KHGNRAVSS), and Ser-119 each bind 5-phospho-alpha-D-ribose 1-diphosphate. Gly-79 contacts anthranilate. Ser-91 lines the Mg(2+) pocket. Asn-110 contacts anthranilate. Arg-165 serves as a coordination point for anthranilate. 2 residues coordinate Mg(2+): Asp-224 and Glu-225.

Belongs to the anthranilate phosphoribosyltransferase family. As to quaternary structure, homodimer. It depends on Mg(2+) as a cofactor.

It catalyses the reaction N-(5-phospho-beta-D-ribosyl)anthranilate + diphosphate = 5-phospho-alpha-D-ribose 1-diphosphate + anthranilate. The protein operates within amino-acid biosynthesis; L-tryptophan biosynthesis; L-tryptophan from chorismate: step 2/5. Its function is as follows. Catalyzes the transfer of the phosphoribosyl group of 5-phosphorylribose-1-pyrophosphate (PRPP) to anthranilate to yield N-(5'-phosphoribosyl)-anthranilate (PRA). The sequence is that of Anthranilate phosphoribosyltransferase from Geobacillus kaustophilus (strain HTA426).